The following is a 259-amino-acid chain: GDP-perosamine N-formyltransferase (259 aa).

Residues 89–91 (SLI) and 139–143 (DENFD) contribute to the (6S)-5,6,7,8-tetrahydrofolate site.

This sequence belongs to the Fmt family. Homodimer.

The enzyme catalyses GDP-alpha-D-perosamine + (6R)-10-formyltetrahydrofolate = GDP-N-formyl-alpha-D-perosamine + (6S)-5,6,7,8-tetrahydrofolate + H(+). The protein operates within bacterial outer membrane biogenesis; lipopolysaccharide biosynthesis. In terms of biological role, involved in the lipopolysaccharide (LPS) O-antigen biosynthesis. Catalyzes the transfer of a formyl group to GDP-perosamine, leading to the formation of GDP-N-formylperosamine. Is critical for full bacterial virulence. The polypeptide is GDP-perosamine N-formyltransferase (Brucella abortus (strain 2308)).